The primary structure comprises 328 residues: uncharacterized protein (328 aa).

The protein to the C-terminal of para-aminobenzoate synthase component I.

This is an uncharacterized protein from Haemophilus influenzae (strain ATCC 51907 / DSM 11121 / KW20 / Rd).